The primary structure comprises 53 residues: Temporin-SHd (53 aa).

The N-terminal stretch at 1-10 is a signal peptide; that stretch reads FLGTINLSLC. Positions 11-34 are excised as a propeptide; sequence EQERDADEEKRDEPDESDVEVEKR. F51 bears the Phenylalanine amide mark.

The protein resides in the secreted. It is found in the target cell membrane. Its function is as follows. Non-amphipathic mildly cationic alpha-helical antimicrobial peptide with potent activity against Gram-positive (including methicillin-resistant Staphylococcus aureus (MRSA)) and Gram-negative bacteria, and some fungi, as well as against Trypanosoma and Leishmania (both promastigote and amastigote forms). Strongly and selectively perturbs anionic bilayer membranes by interacting with the polar head groups and acyl region of the phospholipids, with formation of regions of two coexisting phases, one phase rich in peptide and the other lipid-rich. Shows low hemolytic activity (LC(50)=44 uM) and a low toxicity for human monocytes THP-1 and THP-1-derived macrophages. Is not toxic to human hepatoma-derived cells. This chain is Temporin-SHd, found in Pelophylax saharicus (Sahara frog).